The sequence spans 500 residues: MSNSVPLLCFWSLCYCFAAGSPVPFGPEGRLEDKLHKPKATQTEVKPSVRFNLRTSKDPEHEGCYLSVGHSQPLEDCSFNMTAKTFFIIHGWTMSGIFENWLHKLVSALHTREKDANVVVVDWLPLAHQLYTDAVNNTRVVGHSIARMLDWLQEKDDFSLGNVHLIGYSLGAHVAGYAGNFVKGTVGRITGLDPAGPMFEGADIHKRLSPDDADFVDVLHTYTRSFGLSIGIQMPVGHIDIYPNGGDFQPGCGLNDVLGSIAYGTITEVVKCEHERAVHLFVDSLVNQDKPSFAFQCTDSNRFKKGICLSCRKNRCNSIGYNAKKMRNKRNSKMYLKTRAGMPFRVYHYQMKIHVFSYKNMGEIEPTFYVTLYGTNADSQTLPLEIVERIEQNATNTFLVYTEEDLGDLLKIQLTWEGASQSWYNLWKEFRSYLSQPRNPGRELNIRRIRVKSGETQRKLTFCTEDPENTSISPGRELWFRKCRDGWRMKNETSPTVELP.

The first 20 residues, Met-1–Gly-20, serve as a signal peptide directing secretion. Cys-64 and Cys-77 form a disulfide bridge. Asn-80 and Asn-136 each carry an N-linked (GlcNAc...) asparagine glycan. Ser-169 functions as the Nucleophile in the catalytic mechanism. Catalysis depends on Asp-193, which acts as the Charge relay system. A disulfide bond links Cys-252 and Cys-272. Residue His-274 is the Charge relay system of the active site. Intrachain disulfides connect Cys-297-Cys-316 and Cys-308-Cys-311. Position 325–337 (Lys-325–Lys-337) interacts with heparin. Positions Tyr-347–Lys-482 constitute a PLAT domain. 3 N-linked (GlcNAc...) asparagine glycosylation sites follow: Asn-393, Asn-469, and Asn-491. Cys-463 and Cys-483 are oxidised to a cystine.

Belongs to the AB hydrolase superfamily. Lipase family. In terms of assembly, head to tail homodimer. In terms of tissue distribution, high level of expression in the liver, placenta, lung, thyroid, kidney, testis and in the corpus luteum of the ovary. Expressed also in coronary artery endothelial cells, umbilical vein endothelial cells and in hepatocytes and osteosarcoma cell lines. Not detected in heart, brain and muscle.

The protein resides in the secreted. It catalyses the reaction a triacylglycerol + H2O = a diacylglycerol + a fatty acid + H(+). It carries out the reaction a 1,2-diacyl-sn-glycero-3-phosphocholine + H2O = a 2-acyl-sn-glycero-3-phosphocholine + a fatty acid + H(+). The catalysed reaction is 1,2,3-tri-(9Z-octadecenoyl)-glycerol + H2O = di-(9Z)-octadecenoylglycerol + (9Z)-octadecenoate + H(+). The enzyme catalyses 1,2,3-tributanoylglycerol + H2O = dibutanoylglycerol + butanoate + H(+). It catalyses the reaction 1,2-dihexadecanoyl-sn-glycero-3-phosphocholine + H2O = hexadecanoyl-sn-glycero-3-phosphocholine + hexadecanoate + H(+). Its activity is regulated as follows. Inhibited by serum and NaCl. Exerts both phospholipase and triglyceride lipase activities. More active as a phospholipase than a triglyceride lipase. Hydrolyzes triglycerides, both with short-chain fatty acyl groups (tributyrin) and long-chain fatty acyl groups (triolein) with similar levels of activity toward both types of substrates. Hydrolyzes high density lipoproteins (HDL) more efficiently than other lipoproteins. The sequence is that of Endothelial lipase (LIPG) from Homo sapiens (Human).